Reading from the N-terminus, the 120-residue chain is Seripauperin-6 (120 aa).

The first 20 residues, 1 to 20, serve as a signal peptide directing secretion; that stretch reads MVKLTSIAAGVAAIAATASA.

The protein belongs to the SRP1/TIP1 family. Seripauperin subfamily.

The protein is Seripauperin-6 (PAU6) of Saccharomyces cerevisiae (strain ATCC 204508 / S288c) (Baker's yeast).